A 240-amino-acid chain; its full sequence is EF-hand domain-containing protein D2 (240 aa).

Ala-2 carries the N-acetylalanine modification. Ser-11 is subject to Phosphoserine. Residues 13–38 are disordered; it reads RLQMEGEGGGETPEQPGLNGAAAAAA. Phosphoserine occurs at positions 74 and 76. Tyr-83 bears the Phosphotyrosine mark. EF-hand domains follow at residues 92 to 127 and 128 to 163; these read KQIK…LGAP and QTHL…AAAG. Positions 105, 109, 116, 141, 143, 145, 147, and 152 each coordinate Ca(2+). N6-acetyllysine is present on Lys-233.

Interacts with CASP9; with inactive form. In terms of tissue distribution, found in lymphocytes; preferentially expressed in CD8+ cells.

It localises to the membrane raft. May regulate B-cell receptor (BCR)-induced immature and primary B-cell apoptosis. Plays a role as negative regulator of the canonical NF-kappa-B-activating branch. Controls spontaneous apoptosis through the regulation of BCL2L1 abundance. The sequence is that of EF-hand domain-containing protein D2 (EFHD2) from Homo sapiens (Human).